We begin with the raw amino-acid sequence, 446 residues long: Corrinoid/iron-sulfur protein large subunit (446 aa).

The 58-residue stretch at 2–59 (PLTGLEIYKQLPKKNCGECGTPTCLAFAMNLASGKASLDSCPYVSDAAREALDAAAAP) folds into the 4Fe-4S domain. Positions 17, 20, 25, and 42 each coordinate [4Fe-4S] cluster. 5-methoxybenzimidazolylcob(I)amide-binding positions include T340, T346, 370-373 (GLSV), and A433.

In terms of assembly, heterohexamer composed of 2 subunits of AcsC, 2 subunits of AcsD and 2 subunits of AcsE. [4Fe-4S] cluster serves as cofactor.

Acts as a methyl group carrier in the anaerobic acetyl-CoA pathway (Wood-Ljungdahl pathway) of carbon monoxide and carbon dioxide fixation. Binds the corrinoid 5-methoxybenzimidazolylcobamide which is then methylated by the AcsE subunit. The sequence is that of Corrinoid/iron-sulfur protein large subunit (acsC) from Moorella thermoacetica (Clostridium thermoaceticum).